The following is a 985-amino-acid chain: UPF0182 protein cgR_0895 (985 aa).

A run of 7 helical transmembrane segments spans residues 19–39 (VTWIFAIIALIILIAPMSVGF), 63–83 (IVLFVIFALIAGFVTWLAGYF), 115–135 (VMVLIPIFVALLAGLIGQRSW), 176–196 (SMMLIVAFLIALVGHYLMGGI), 215–235 (TQLAVTAGLWMLVKVAGYWLD), 262–282 (KIILLVIALFVAIAFFSAIFL), and 290–310 (LAVVLMLLSSVIIGAAWPLML). The disordered stretch occupies residues 906–944 (AQDIEEVDGTTTTPSTDETDTDTDQPATETPTAPVSEAE). Residues 929-939 (DQPATETPTAP) are compositionally biased toward low complexity.

It belongs to the UPF0182 family.

Its subcellular location is the cell membrane. This chain is UPF0182 protein cgR_0895, found in Corynebacterium glutamicum (strain R).